The chain runs to 107 residues: Glutaredoxin 4 (107 aa).

Positions 4–106 (IEKIERQIKD…KIISNAVLNS (103 aa)) constitute a Glutaredoxin domain. Lysine 21 lines the glutathione pocket. Cysteine 29 lines the [2Fe-2S] cluster pocket. Residues arginine 58, phenylalanine 70, and 83-84 (CS) each bind glutathione.

This sequence belongs to the glutaredoxin family. Monothiol subfamily. As to quaternary structure, homodimer.

The protein localises to the cytoplasm. In terms of biological role, monothiol glutaredoxin involved in the biogenesis of iron-sulfur clusters. The chain is Glutaredoxin 4 (grxD) from Buchnera aphidicola subsp. Schizaphis graminum (strain Sg).